Here is a 259-residue protein sequence, read N- to C-terminus: 5'-nucleotidase SurE (259 aa).

Residues aspartate 8, aspartate 9, serine 41, and asparagine 100 each coordinate a divalent metal cation.

This sequence belongs to the SurE nucleotidase family. The cofactor is a divalent metal cation.

Its subcellular location is the cytoplasm. It catalyses the reaction a ribonucleoside 5'-phosphate + H2O = a ribonucleoside + phosphate. Functionally, nucleotidase that shows phosphatase activity on nucleoside 5'-monophosphates. The protein is 5'-nucleotidase SurE of Natranaerobius thermophilus (strain ATCC BAA-1301 / DSM 18059 / JW/NM-WN-LF).